Reading from the N-terminus, the 120-residue chain is Large ribosomal subunit protein bL19 (120 aa).

Belongs to the bacterial ribosomal protein bL19 family.

This protein is located at the 30S-50S ribosomal subunit interface and may play a role in the structure and function of the aminoacyl-tRNA binding site. The protein is Large ribosomal subunit protein bL19 of Kocuria rhizophila (strain ATCC 9341 / DSM 348 / NBRC 103217 / DC2201).